Reading from the N-terminus, the 389-residue chain is MTTKCPHFQTQQCQSCQWINRPYDEQLNEKQIHLKQQIAPLDQSQLRWSAPFQSRQSGFRNKAKMVVSGAVERPVLGILKDQNAPQSAVDLTDCLLYSAGFKPIFPVLKDFIGRAGLVPYNVAKQKGELKYILLTESGYQGDIMLRFVLRSENKIPLIRRELAKLREKLPQLKVISANIQPQHAAILEGEKEIFFTERQVLEERFNRIPLFIRPQGFFQTNPQVAEGLYGTAQQWVKDLPVNKLWDLFCGVGGFGLHCAKALQEKNPDIELTGIEIAPSAIYCAGLSAQKCGLKKVNFQSLDAANFALNQDENKPDLVIVNPPRRGIGKPLAQFLNQMQPQFILYSSCNAISMTKDLLELTHYQLQKIQLFDMFPHTSHYEVLTLLIKR.

[4Fe-4S] cluster contacts are provided by Cys-5, Cys-13, Cys-16, and Cys-94. Residues Gln-219, Phe-248, Glu-275, and Asn-321 each coordinate S-adenosyl-L-methionine. Catalysis depends on Cys-348, which acts as the Nucleophile.

This sequence belongs to the class I-like SAM-binding methyltransferase superfamily. RNA M5U methyltransferase family. RlmC subfamily.

The enzyme catalyses uridine(747) in 23S rRNA + S-adenosyl-L-methionine = 5-methyluridine(747) in 23S rRNA + S-adenosyl-L-homocysteine + H(+). Catalyzes the formation of 5-methyl-uridine at position 747 (m5U747) in 23S rRNA. The protein is 23S rRNA (uracil(747)-C(5))-methyltransferase RlmC of Mannheimia succiniciproducens (strain KCTC 0769BP / MBEL55E).